A 388-amino-acid polypeptide reads, in one-letter code: Protein TsgA homolog (388 aa).

12 helical membrane-spanning segments follow: residues 12–32 (CISF…GIFL), 51–71 (TFLN…TNII), 77–97 (LIFG…SHNL), 102–122 (ISMF…TYII), 137–157 (LTDS…ALII), 163–183 (WYWV…ITIN), 203–223 (FSIL…LSFI), 246–266 (SAFW…LKFF), 272–292 (IITL…FYDY), 294–314 (LLYI…TIII), 331–351 (YILT…GPIV), and 356–376 (IFSA…LVII).

The protein belongs to the major facilitator superfamily. TsgA family.

It is found in the cell membrane. In Buchnera aphidicola subsp. Baizongia pistaciae (strain Bp), this protein is Protein TsgA homolog.